A 150-amino-acid polypeptide reads, in one-letter code: Ribonuclease K6 (150 aa).

Residues 1–23 form the signal peptide; it reads MVLCFPLLLLLLVLWGPVCLLHA. The active-site Proton acceptor is the His38. Intrachain disulfides connect Cys46-Cys104, Cys60-Cys114, Cys78-Cys129, and Cys85-Cys92. A glycan (N-linked (GlcNAc...) asparagine) is linked at Asn55. Substrate-binding positions include 61-65 and Lys86; that span reads KHQNT. An N-linked (GlcNAc...) asparagine glycan is attached at Asn100. Arg105 serves as a coordination point for substrate. His145 (proton donor) is an active-site residue.

Belongs to the pancreatic ribonuclease family. In terms of assembly, interacts (via N-terminus) with bacterial lipopolysaccharide (LPS).

It is found in the secreted. Its subcellular location is the lysosome. It localises to the cytoplasmic granule. Ribonuclease which shows a preference for the pyrimidines uridine and cytosine. Has potent antibacterial activity against a range of Gram-positive and Gram-negative bacteria, including P.aeruginosa, A.baumanii, M.luteus, S.aureus, E.faecalis, E.faecium, S.saprophyticus and E.coli. Causes loss of bacterial membrane integrity, and also promotes agglutination of Gram-negative bacteria. Probably contributes to urinary tract sterility. Bactericidal activity is independent of RNase activity. The protein is Ribonuclease K6 (RNASE6) of Papio hamadryas (Hamadryas baboon).